The primary structure comprises 266 residues: uncharacterized protein (266 aa).

A signal peptide spans 1 to 22 (MGYLKRLVLYIVIMVMSVFIIG). C23 is lipidated: N-palmitoyl cysteine. Residue C23 is the site of S-diacylglycerol cysteine attachment.

Belongs to the staphylococcal tandem lipoprotein family.

Its subcellular location is the cell membrane. This is an uncharacterized protein from Staphylococcus aureus (strain USA300).